A 124-amino-acid polypeptide reads, in one-letter code: V-type proton ATPase subunit F (124 aa).

The protein belongs to the V-ATPase F subunit family. V-ATPase is a heteromultimeric enzyme composed of a peripheral catalytic V1 complex (components A to H) attached to an integral membrane V0 proton pore complex (components: a, c, c', c'', d, e, f and VOA1).

Its subcellular location is the vacuole membrane. Subunit of the V1 complex of vacuolar(H+)-ATPase (V-ATPase), a multisubunit enzyme composed of a peripheral complex (V1) that hydrolyzes ATP and a membrane integral complex (V0) that translocates protons. V-ATPase is responsible for acidifying and maintaining the pH of intracellular compartments. In Neurospora crassa (strain ATCC 24698 / 74-OR23-1A / CBS 708.71 / DSM 1257 / FGSC 987), this protein is V-type proton ATPase subunit F (vma-7).